Here is a 258-residue protein sequence, read N- to C-terminus: Indole-3-glycerol phosphate synthase (258 aa).

It belongs to the TrpC family.

The catalysed reaction is 1-(2-carboxyphenylamino)-1-deoxy-D-ribulose 5-phosphate + H(+) = (1S,2R)-1-C-(indol-3-yl)glycerol 3-phosphate + CO2 + H2O. It participates in amino-acid biosynthesis; L-tryptophan biosynthesis; L-tryptophan from chorismate: step 4/5. The polypeptide is Indole-3-glycerol phosphate synthase (Campylobacter fetus subsp. fetus (strain 82-40)).